The chain runs to 858 residues: MSVVGLDVGSQSCYIAVARAGGIETIANEFSDRCTPSVISFGSKNRTIGVAAKNQQITHANNTVSNFKRFHGRAFNDPFIQKEKENLSYDLVPLKNGGVGIKVMYMGEEHLFSVEQITAMLLTKLKETAENSLKKPVTDCVISVPSFFTDAERRSVLDAAQIVGLNCLRLMNDMTAVALNYGIYKQDLPSLDEKPRIVVFVDMGHSAFQVSACAFNKGKLKVLGTAFDPFLGGKNFDEKLVEHFCAEFKTKYKLDAKSKIRALLRLYQECEKLKKLMSSNSTDLPLNIECFMNDKDVSGKMNRSQFEELCAELLQKIEVPLYSLLEQTHLKVEDVSAVEIVGGATRIPAVKERIAKFFGKDISTTLNADEAVARGCALQCAILSPAFKVREFSVTDAVPFPISLIWNHDSEDTEGVHEVFSRNHAAPFSKVLTFLRRGPFELEAFYSDPQGVPYPEAKIGRFVVQNVSAQKDGEKSRVKVKVRVNTHGIFTISTASMVEKVPTEENEMSSEADMECLNQRPPENPDTDKNVQQDNSEAGTQPQVQTDAQQTSQSPPSPELTSEENKIPDADKANEKKVDQPPEAKKPKIKVVNVELPIEANLVWQLGKDLLNMYIETEGKMIMQDKLEKERNDAKNAVEEYVYEFRDKLCGPYEKFICEQDHQNFLRLLTETEDWLYEEGEDQAKQAYVDKLEELMKIGTPVKVRFQEAEERPKMFEELGQRLQHYAKIAADFRNKDEKYNHIDESEMKKVEKSVNEVMEWMNNVMNAQAKKSLDQDPVVRAQEIKTKIKELNNTCEPVVTQPKPKIESPKLERTPNGPNIDKKEEDLEDKNNFGAEPPHQNGECYPNEKNSVNMDLD.

S2 carries the post-translational modification N-acetylserine. N6-acetyllysine is present on K471. Disordered regions lie at residues 500–584 (KVPT…PPEA) and 796–858 (CEPV…MDLD). Acidic residues predominate over residues 504–514 (EENEMSSEADM). Phosphoserine occurs at positions 509 and 510. The span at 532 to 554 (QQDNSEAGTQPQVQTDAQQTSQS) shows a compositional bias: polar residues. The residue at position 557 (S557) is a Phosphoserine. T561 carries the post-translational modification Phosphothreonine. 2 stretches are compositionally biased toward basic and acidic residues: residues 563–584 (EENK…PPEA) and 805–814 (PKIESPKLER). A Phosphoserine modification is found at S809. At T815 the chain carries Phosphothreonine. Residues 821 to 832 (IDKKEEDLEDKN) show a composition bias toward basic and acidic residues. The segment covering 849 to 858 (EKNSVNMDLD) has biased composition (polar residues).

It belongs to the heat shock protein 70 family. Interacts with HSPA8/HSC70. Interacts with HSPA1A (via NBD) and HSPA1B (via NBD). Post-translationally, phosphorylation on Ser-509 may be important for regulation of the HSPA8/HSC70 chaperone activity. In terms of tissue distribution, highly expressed in testis. Present at lower levels in most brain regions, except cerebellum. Overexpressed in cancer cells.

The protein resides in the cytoplasm. In terms of biological role, acts as a nucleotide-exchange factor (NEF) for chaperone proteins HSPA1A and HSPA1B, promoting the release of ADP from HSPA1A/B thereby triggering client/substrate protein release. Prevents the aggregation of denatured proteins in cells under severe stress, on which the ATP levels decrease markedly. Inhibits HSPA8/HSC70 ATPase and chaperone activities. The sequence is that of Heat shock protein 105 kDa (HSPH1) from Homo sapiens (Human).